A 409-amino-acid chain; its full sequence is Ribose-phosphate pyrophosphokinase 3, chloroplastic (409 aa).

Low complexity-rich tracts occupy residues 1–16 and 34–43; these read MATA…PAAA and PASAFARPSP. A disordered region spans residues 1–43; it reads MATAASASASASPAAAFGAKTRRPGPSPSPSPSPASAFARPSP. The N-terminal 44 residues, 1-44, are a transit peptide targeting the chloroplast; it reads MATAASASASASPAAAFGAKTRRPGPSPSPSPSPASAFARPSPR. The Mg(2+) site is built by Asp229 and His231. The tract at residues 312 to 327 is binding of phosphoribosylpyrophosphate; that stretch reads GRHVVIVDDLVQSGGT.

This sequence belongs to the ribose-phosphate pyrophosphokinase family. It depends on Mg(2+) as a cofactor.

The protein resides in the plastid. It is found in the chloroplast. It catalyses the reaction D-ribose 5-phosphate + ATP = 5-phospho-alpha-D-ribose 1-diphosphate + AMP + H(+). The polypeptide is Ribose-phosphate pyrophosphokinase 3, chloroplastic (Oryza sativa subsp. japonica (Rice)).